The sequence spans 552 residues: Urocanate hydratase (552 aa).

Residues 49–50 (GG), Gln127, 173–175 (GMG), Asp193, 239–240 (NA), 260–264 (QTSAH), 270–271 (YI), and Tyr319 each bind NAD(+). Cys407 is a catalytic residue. Gly489 is an NAD(+) binding site.

This sequence belongs to the urocanase family. NAD(+) is required as a cofactor.

The protein resides in the cytoplasm. The enzyme catalyses 4-imidazolone-5-propanoate = trans-urocanate + H2O. It functions in the pathway amino-acid degradation; L-histidine degradation into L-glutamate; N-formimidoyl-L-glutamate from L-histidine: step 2/3. In terms of biological role, catalyzes the conversion of urocanate to 4-imidazolone-5-propionate. In Bacillus anthracis (strain CDC 684 / NRRL 3495), this protein is Urocanate hydratase.